A 91-amino-acid polypeptide reads, in one-letter code: Small ribosomal subunit protein uS15 (91 aa).

Belongs to the universal ribosomal protein uS15 family. As to quaternary structure, part of the 30S ribosomal subunit. Forms a bridge to the 50S subunit in the 70S ribosome, contacting the 23S rRNA.

One of the primary rRNA binding proteins, it binds directly to 16S rRNA where it helps nucleate assembly of the platform of the 30S subunit by binding and bridging several RNA helices of the 16S rRNA. Functionally, forms an intersubunit bridge (bridge B4) with the 23S rRNA of the 50S subunit in the ribosome. The chain is Small ribosomal subunit protein uS15 from Nautilia profundicola (strain ATCC BAA-1463 / DSM 18972 / AmH).